The following is a 23-amino-acid chain: Aurein-4.1 (23 aa).

It belongs to the frog skin active peptide (FSAP) family. Aurein subfamily. In terms of tissue distribution, expressed by the skin dorsal glands.

It localises to the secreted. Its function is as follows. Has no antimicrobial or anticancer activity. The chain is Aurein-4.1 from Ranoidea aurea (Green and golden bell frog).